The sequence spans 67 residues: Small ribosomal subunit protein eS31 (67 aa).

Positions 31, 34, 49, and 52 each coordinate Zn(2+). Residues 31–52 (CPKCGAGVFMAEHLNRFACGKC) form a C4-type zinc finger.

This sequence belongs to the eukaryotic ribosomal protein eS31 family. In terms of assembly, part of the 30S ribosomal subunit. Requires Zn(2+) as cofactor.

In Methanococcus maripaludis (strain C7 / ATCC BAA-1331), this protein is Small ribosomal subunit protein eS31.